The following is a 346-amino-acid chain: Phosphoribosylformylglycinamidine cyclo-ligase (346 aa).

It belongs to the AIR synthase family.

It is found in the cytoplasm. The catalysed reaction is 2-formamido-N(1)-(5-O-phospho-beta-D-ribosyl)acetamidine + ATP = 5-amino-1-(5-phospho-beta-D-ribosyl)imidazole + ADP + phosphate + H(+). Its pathway is purine metabolism; IMP biosynthesis via de novo pathway; 5-amino-1-(5-phospho-D-ribosyl)imidazole from N(2)-formyl-N(1)-(5-phospho-D-ribosyl)glycinamide: step 2/2. This chain is Phosphoribosylformylglycinamidine cyclo-ligase, found in Geobacillus sp. (strain WCH70).